The sequence spans 400 residues: UDP-glucuronate:glycolipid 2-beta-glucuronosyltransferase (400 aa).

D157 (proton acceptor) is an active-site residue. Residues 230–231 (SM), 272–273 (EM), Y292, and 306–310 (MKLLQ) each bind UDP-alpha-D-glucuronate. Positions 377-400 (PETRLYPHPPTAAPQLSSEAALSH) are disordered. The span at 390-400 (PQLSSEAALSH) shows a compositional bias: polar residues.

It belongs to the glycosyltransferase 70 family.

It is found in the cell inner membrane. The enzyme catalyses alpha-D-Man-(1-&gt;3)-beta-D-Glc-(1-&gt;4)-alpha-D-Glc-1-di-trans,octa-cis-undecaprenyl diphosphate + UDP-alpha-D-glucuronate = beta-D-GlcA-(1-&gt;2)-alpha-D-Man-(1-&gt;3)-beta-D-Glc-(1-&gt;4)-alpha-D-Glc-di-trans,octa-cis-undecaprenyl diphosphate + UDP + H(+). The protein operates within glycan biosynthesis; xanthan biosynthesis. Functionally, catalyzes the transfer of a glucuronic acid (GlcA) residue from UDP-glucuronate to mannose-alpha-1,3-glucose-beta-1,4-glucose-P-P-polyisoprenyl to form the lipid-linked tetrasaccharide GlcA-Man-Glc(2)-PP-Pol, with a glucuronic acid-beta-mannose linkage. Is involved in the biosynthesis of the exopolysaccharide xanthan, since it catalyzes the fourth glycosylation step in the assembly of the pentasaccharide-P-P-polyisoprenyl repeating unit of xanthan. Is unable to use the trisaccharide acceptor freed from the pyrophosphate lipid moiety. Does not show specificity for the lipidic portion of the acceptor. Shows diminished activity when tested with 6-O-acetyl-mannose-alpha-1,3-glucose-beta-1,4-glucose-P-P-polyisoprenyl, a putative intermediate in the synthesis of xanthan; this could indicate that acetylation of the internal mannose takes place after the formation of the GumK product. This chain is UDP-glucuronate:glycolipid 2-beta-glucuronosyltransferase (gumK), found in Xanthomonas campestris pv. campestris.